We begin with the raw amino-acid sequence, 1047 residues long: Error-prone DNA polymerase (1047 aa).

This sequence belongs to the DNA polymerase type-C family. DnaE2 subfamily.

It localises to the cytoplasm. The enzyme catalyses DNA(n) + a 2'-deoxyribonucleoside 5'-triphosphate = DNA(n+1) + diphosphate. Its function is as follows. DNA polymerase involved in damage-induced mutagenesis and translesion synthesis (TLS). It is not the major replicative DNA polymerase. The polypeptide is Error-prone DNA polymerase (Methylococcus capsulatus (strain ATCC 33009 / NCIMB 11132 / Bath)).